Here is a 2534-residue protein sequence, read N- to C-terminus: Highly reducing polyketide synthase easB (2534 aa).

The tract at residues 1–49 (MSPASRSRVEIADSESDSERLSSSPWSILSDNDSNTSDERSTRAGPGSL) is disordered. Residues 49 to 470 (LEPIAVIGIG…GTNAHVIIDA (422 aa)) form the Ketosynthase family 3 (KS3) domain. Active-site for beta-ketoacyl synthase activity residues include Cys-222, His-356, and His-396. Positions 587 to 885 (IFSGQGAQYA…LSGPVNQILK (299 aa)) are malonyl-CoA:ACP transacylase (MAT) domain. The N-terminal hotdog fold stretch occupies residues 973–1111 (HELLGTLSAD…GLVQAEVDSV (139 aa)). Residues 973–1273 (HELLGTLSAD…QGIRVTSLGG (301 aa)) are dehydratase (DH) domain. Residues 973-1277 (HELLGTLSAD…VTSLGGDVAA (305 aa)) enclose the PKS/mFAS DH domain. Catalysis depends on His-1005, which acts as the Proton acceptor; for dehydratase activity. The C-terminal hotdog fold stretch occupies residues 1131–1277 (THGTIPQKFY…VTSLGGDVAA (147 aa)). The Proton donor; for dehydratase activity role is filled by Asp-1193. Positions 1395–1625 (KTSALSLLTK…VFISTAPFPR (231 aa)) are methyltransferase (CMet) domain. An enoyl reductase (ER) domain region spans residues 1834–2146 (GLLETIRWKD…AGKHTGKIVL (313 aa)). The region spanning 2452 to 2529 (EAVHIVTNAI…QLAAIVAKES (78 aa)) is the Carrier domain. The tract at residues 2453-2526 (AVHIVTNAIL…SISQLAAIVA (74 aa)) is ketoreductase (KR) domain. Ser-2489 is subject to O-(pantetheine 4'-phosphoryl)serine.

It functions in the pathway antibiotic biosynthesis. In terms of biological role, polyketide synthase; part of the gene cluster that mediates the biosynthesis of emericellamides, secondary metabolites acting as antibiotics. The biosynthesis of emericellamides initiates from the highly reducing polyketide synthase easB which catalyzes the formation of the linear polyketide chain. EasB produces several polyketides that can be further processed by the downstream enzymes. The polyketides are released from easB as linear polyketide carboxylic acids, which are converted to CoA thioesters by the acyl-CoA ligase easD. The substrates are then loaded onto the acyltransferase easC, which shuttles them to the first thiolation (T) domain of the nonribosomal peptide synthetase easA. EasA then performs condensation of the polyketides with one glycine, two alanine, one valine and one leucine residues. A last step of cyclization leads to the production of emericellamides. This is Highly reducing polyketide synthase easB from Emericella nidulans (strain FGSC A4 / ATCC 38163 / CBS 112.46 / NRRL 194 / M139) (Aspergillus nidulans).